Here is a 296-residue protein sequence, read N- to C-terminus: Isoprenyl transferase (296 aa).

Residues 1–11 (MATERNRRRKG) show a composition bias toward basic residues. Residues 1–29 (MATERNRRRKGSYPQLPPAPDDYPTFPDK) are disordered. Asp76 is an active-site residue. Asp76 is a Mg(2+) binding site. Residues 77 to 80 (GNGR), Trp81, Arg89, His93, and 121 to 123 (STE) each bind substrate. The active-site Proton acceptor is Asn124. Substrate-binding positions include Trp125, Arg127, Arg244, and 250–252 (RAS). Glu263 serves as a coordination point for Mg(2+).

This sequence belongs to the UPP synthase family. Homodimer. Requires Mg(2+) as cofactor.

In terms of biological role, catalyzes the condensation of isopentenyl diphosphate (IPP) with allylic pyrophosphates generating different type of terpenoids. This chain is Isoprenyl transferase, found in Mycolicibacterium parafortuitum (Mycobacterium parafortuitum).